Consider the following 142-residue polypeptide: UPF0102 protein PsycPRwf_0497 (142 aa).

This sequence belongs to the UPF0102 family.

This chain is UPF0102 protein PsycPRwf_0497, found in Psychrobacter sp. (strain PRwf-1).